Reading from the N-terminus, the 492-residue chain is NAD(P)H-quinone oxidoreductase subunit 2 A, chloroplastic (492 aa).

Transmembrane regions (helical) follow at residues 6-26 (LLLFDGSLIFPECILIFGLIL), 39-59 (ISWFYFISSTSLVMSITALLF), 81-101 (IFQFLILLCSTLCIPLSVEYI), 106-126 (MAITEFLLFILTTTLGGMFLC), 131-151 (LITIFVALECFSLCSYLLSGY), 165-185 (YLLMGGASSSILVHGFSWLYG), 209-229 (PGILIALLFITVGIGFKLSPA), 277-297 (WHLLLEILAILSMILGNLIAI), 305-325 (MLAYSSIGQIGYVIIGIIVGD), 336-356 (YMLFYISMNLGTFACIVSFGL), 377-397 (ALSLALCLLSLGGLPPLAGFF), 400-420 (LHLFWCGWQAGLYFLVSIGLL), and 464-484 (FSMIVCVIASTIPGISMNPII).

This sequence belongs to the complex I subunit 2 family. NDH is composed of at least 16 different subunits, 5 of which are encoded in the nucleus.

It is found in the plastid. The protein resides in the chloroplast thylakoid membrane. It catalyses the reaction a plastoquinone + NADH + (n+1) H(+)(in) = a plastoquinol + NAD(+) + n H(+)(out). The enzyme catalyses a plastoquinone + NADPH + (n+1) H(+)(in) = a plastoquinol + NADP(+) + n H(+)(out). In terms of biological role, NDH shuttles electrons from NAD(P)H:plastoquinone, via FMN and iron-sulfur (Fe-S) centers, to quinones in the photosynthetic chain and possibly in a chloroplast respiratory chain. The immediate electron acceptor for the enzyme in this species is believed to be plastoquinone. Couples the redox reaction to proton translocation, and thus conserves the redox energy in a proton gradient. The chain is NAD(P)H-quinone oxidoreductase subunit 2 A, chloroplastic from Phaseolus vulgaris (Kidney bean).